We begin with the raw amino-acid sequence, 204 residues long: Large ribosomal subunit protein eL15 (204 aa).

This sequence belongs to the eukaryotic ribosomal protein eL15 family. Component of the large ribosomal subunit.

It is found in the cytoplasm. Component of the large ribosomal subunit. The ribosome is a large ribonucleoprotein complex responsible for the synthesis of proteins in the cell. The polypeptide is Large ribosomal subunit protein eL15 (rpl15) (Silurus meridionalis (Southern catfish)).